We begin with the raw amino-acid sequence, 116 residues long: Small ribosomal subunit protein bS16 (116 aa).

Belongs to the bacterial ribosomal protein bS16 family.

In Chlamydia muridarum (strain MoPn / Nigg), this protein is Small ribosomal subunit protein bS16.